The primary structure comprises 450 residues: Signal recognition particle 54 kDa protein (450 aa).

GTP is bound by residues 107-114 (GIQGSGKT), 188-192 (DTAGR), and 247-250 (TKLD).

This sequence belongs to the GTP-binding SRP family. SRP54 subfamily. In terms of assembly, part of the signal recognition particle protein translocation system, which is composed of SRP and FtsY. Archaeal SRP consists of a 7S RNA molecule of 300 nucleotides and two protein subunits: SRP54 and SRP19.

The protein localises to the cytoplasm. It carries out the reaction GTP + H2O = GDP + phosphate + H(+). In terms of biological role, involved in targeting and insertion of nascent membrane proteins into the cytoplasmic membrane. Binds to the hydrophobic signal sequence of the ribosome-nascent chain (RNC) as it emerges from the ribosomes. The SRP-RNC complex is then targeted to the cytoplasmic membrane where it interacts with the SRP receptor FtsY. The protein is Signal recognition particle 54 kDa protein of Methanococcus maripaludis (strain DSM 14266 / JCM 13030 / NBRC 101832 / S2 / LL).